We begin with the raw amino-acid sequence, 258 residues long: Imidazole glycerol phosphate synthase subunit HisF (258 aa).

Catalysis depends on residues Asp11 and Asp130.

This sequence belongs to the HisA/HisF family. Heterodimer of HisH and HisF.

The protein localises to the cytoplasm. It carries out the reaction 5-[(5-phospho-1-deoxy-D-ribulos-1-ylimino)methylamino]-1-(5-phospho-beta-D-ribosyl)imidazole-4-carboxamide + L-glutamine = D-erythro-1-(imidazol-4-yl)glycerol 3-phosphate + 5-amino-1-(5-phospho-beta-D-ribosyl)imidazole-4-carboxamide + L-glutamate + H(+). The protein operates within amino-acid biosynthesis; L-histidine biosynthesis; L-histidine from 5-phospho-alpha-D-ribose 1-diphosphate: step 5/9. Its function is as follows. IGPS catalyzes the conversion of PRFAR and glutamine to IGP, AICAR and glutamate. The HisF subunit catalyzes the cyclization activity that produces IGP and AICAR from PRFAR using the ammonia provided by the HisH subunit. This Xanthomonas campestris pv. campestris (strain B100) protein is Imidazole glycerol phosphate synthase subunit HisF.